The chain runs to 406 residues: Acetylornithine/succinyldiaminopimelate aminotransferase (406 aa).

Residues 108–109 (GT) and Phe141 each bind pyridoxal 5'-phosphate. Position 144 (Arg144) interacts with N(2)-acetyl-L-ornithine. Residue 226–229 (DEVQ) participates in pyridoxal 5'-phosphate binding. Lys255 carries the post-translational modification N6-(pyridoxal phosphate)lysine. A N(2)-acetyl-L-ornithine-binding site is contributed by Ser283. Thr284 contributes to the pyridoxal 5'-phosphate binding site.

Belongs to the class-III pyridoxal-phosphate-dependent aminotransferase family. ArgD subfamily. Homodimer. Pyridoxal 5'-phosphate serves as cofactor.

It is found in the cytoplasm. The catalysed reaction is N(2)-acetyl-L-ornithine + 2-oxoglutarate = N-acetyl-L-glutamate 5-semialdehyde + L-glutamate. It carries out the reaction N-succinyl-(2S,6S)-2,6-diaminopimelate + 2-oxoglutarate = (S)-2-succinylamino-6-oxoheptanedioate + L-glutamate. It functions in the pathway amino-acid biosynthesis; L-arginine biosynthesis; N(2)-acetyl-L-ornithine from L-glutamate: step 4/4. Its pathway is amino-acid biosynthesis; L-lysine biosynthesis via DAP pathway; LL-2,6-diaminopimelate from (S)-tetrahydrodipicolinate (succinylase route): step 2/3. In terms of biological role, involved in both the arginine and lysine biosynthetic pathways. The sequence is that of Acetylornithine/succinyldiaminopimelate aminotransferase from Escherichia coli (strain K12).